Here is a 194-residue protein sequence, read N- to C-terminus: Fe/S biogenesis protein NfuA (194 aa).

[4Fe-4S] cluster is bound by residues Cys-151 and Cys-154.

Belongs to the NfuA family. As to quaternary structure, homodimer. It depends on [4Fe-4S] cluster as a cofactor.

Involved in iron-sulfur cluster biogenesis. Binds a 4Fe-4S cluster, can transfer this cluster to apoproteins, and thereby intervenes in the maturation of Fe/S proteins. Could also act as a scaffold/chaperone for damaged Fe/S proteins. The sequence is that of Fe/S biogenesis protein NfuA from Pasteurella multocida (strain Pm70).